The following is a 477-amino-acid chain: Glutamate--tRNA ligase (477 aa).

The 'HIGH' region signature appears at 8-18 (PSPTGTLHIGT). Positions 247–251 (KLSKR) match the 'KMSKS' region motif. Lysine 250 is an ATP binding site.

Belongs to the class-I aminoacyl-tRNA synthetase family. Glutamate--tRNA ligase type 1 subfamily. As to quaternary structure, monomer.

The protein resides in the cytoplasm. It catalyses the reaction tRNA(Glu) + L-glutamate + ATP = L-glutamyl-tRNA(Glu) + AMP + diphosphate. Functionally, catalyzes the attachment of glutamate to tRNA(Glu) in a two-step reaction: glutamate is first activated by ATP to form Glu-AMP and then transferred to the acceptor end of tRNA(Glu). This Synechococcus sp. (strain CC9902) protein is Glutamate--tRNA ligase.